We begin with the raw amino-acid sequence, 455 residues long: 23S rRNA (uracil(1939)-C(5))-methyltransferase RlmD (455 aa).

The TRAM domain occupies 12 to 70; sequence SKQLSAKLSLSVTQLDHLGAGIAQHQGKIVFIPGVLPGETATVQFVEQKKSYAKAKLIS. Residues Cys-83, Cys-89, Cys-92, and Cys-174 each coordinate [4Fe-4S] cluster. The S-adenosyl-L-methionine site is built by Gln-288, Phe-317, Asn-322, Glu-338, Asp-365, and Asp-385. Cys-411 functions as the Nucleophile in the catalytic mechanism.

Belongs to the class I-like SAM-binding methyltransferase superfamily. RNA M5U methyltransferase family. RlmD subfamily.

The catalysed reaction is uridine(1939) in 23S rRNA + S-adenosyl-L-methionine = 5-methyluridine(1939) in 23S rRNA + S-adenosyl-L-homocysteine + H(+). Functionally, catalyzes the formation of 5-methyl-uridine at position 1939 (m5U1939) in 23S rRNA. In Shewanella frigidimarina (strain NCIMB 400), this protein is 23S rRNA (uracil(1939)-C(5))-methyltransferase RlmD.